An 81-amino-acid polypeptide reads, in one-letter code: U17-lycotoxin-Ls1a (81 aa).

A signal peptide spans 1-22 (MSSKVQAVLLLVGVITFLAVHA). Residues 23 to 34 (QEELSENTESER) constitute a propeptide that is removed on maturation. 3 disulfides stabilise this stretch: Cys-36–Cys-51, Cys-50–Cys-67, and Cys-58–Cys-65.

It belongs to the neurotoxin 02 (plectoxin) family. In terms of tissue distribution, expressed by the venom gland.

The protein resides in the secreted. This chain is U17-lycotoxin-Ls1a, found in Lycosa singoriensis (Wolf spider).